The primary structure comprises 73 residues: UPF0435 protein lin1819 (73 aa).

It belongs to the UPF0435 family.

The polypeptide is UPF0435 protein lin1819 (Listeria innocua serovar 6a (strain ATCC BAA-680 / CLIP 11262)).